The primary structure comprises 164 residues: Dehydrin Rab16C (164 aa).

The segment covering 42–51 has biased composition (gly residues); that stretch reads MGGHHAGAGG. Residues 42 to 164 are disordered; that stretch reads MGGHHAGAGG…KIKEKLPGQH (123 aa). Positions 105 to 115 are enriched in low complexity; sequence GNNHQQQQMMG. Over residues 128–138 the composition is skewed to gly residues; the sequence is GMTGAGTGTGV. A compositionally biased stretch (basic and acidic residues) spans 147–164; it reads GEKKGFMDKIKEKLPGQH.

It belongs to the plant dehydrin family.

This chain is Dehydrin Rab16C (RAB16C), found in Oryza sativa subsp. indica (Rice).